Reading from the N-terminus, the 214-residue chain is Adenylate kinase (214 aa).

10–15 (GAGKGT) is an ATP binding site. An NMP region spans residues 30-59 (STGDMLRAAIKAGTELGKQAKAVIDAGQLV). Residues Thr31, Arg36, 57–59 (QLV), 85–88 (GFPR), and Gln92 contribute to the AMP site. The segment at 122 to 159 (GRRAHLPSGRTYHVVYNPPKVEGKDDVTGEDLVVRDDD) is LID. ATP is bound by residues Arg123 and 132–133 (TY). AMP contacts are provided by Arg156 and Arg167. Lys200 is an ATP binding site.

Belongs to the adenylate kinase family. As to quaternary structure, monomer.

The protein resides in the cytoplasm. It catalyses the reaction AMP + ATP = 2 ADP. It participates in purine metabolism; AMP biosynthesis via salvage pathway; AMP from ADP: step 1/1. In terms of biological role, catalyzes the reversible transfer of the terminal phosphate group between ATP and AMP. Plays an important role in cellular energy homeostasis and in adenine nucleotide metabolism. This is Adenylate kinase from Vibrio parahaemolyticus serotype O3:K6 (strain RIMD 2210633).